The primary structure comprises 454 residues: Protoheme IX farnesyltransferase 1 (454 aa).

The unknown stretch occupies residues Met1–Leu186. 4 consecutive transmembrane segments (helical) span residues Leu9–Leu29, Gly59–Thr79, Leu87–Gly107, and Leu113–Leu133. The interval Thr137–Ala164 is disordered. Transmembrane regions (helical) follow at residues Leu186–Val206, Val209–Val229, Val251–Phe271, Leu276–Ile296, Asn300–Tyr320, Ala321–Trp341, His377–Asp397, Leu398–Val418, and Phe433–Ala453. The tract at residues Met187–Ser451 is protoheme IX prenyltransferase.

In the C-terminal section; belongs to the UbiA prenyltransferase family. Protoheme IX farnesyltransferase subfamily.

It localises to the cell membrane. It catalyses the reaction heme b + (2E,6E)-farnesyl diphosphate + H2O = Fe(II)-heme o + diphosphate. Its pathway is porphyrin-containing compound metabolism; heme O biosynthesis; heme O from protoheme: step 1/1. Its function is as follows. Converts heme B (protoheme IX) to heme O by substitution of the vinyl group on carbon 2 of heme B porphyrin ring with a hydroxyethyl farnesyl side group. The protein is Protoheme IX farnesyltransferase 1 (ctaB1) of Natronomonas pharaonis (strain ATCC 35678 / DSM 2160 / CIP 103997 / JCM 8858 / NBRC 14720 / NCIMB 2260 / Gabara) (Halobacterium pharaonis).